Reading from the N-terminus, the 514-residue chain is H/ACA ribonucleoprotein complex subunit DKC1 (514 aa).

A2 is modified (N-acetylalanine). The interval 2-21 is nucleolar localization; the sequence is ADAEVIILPKKHKKKKERKS. K20 is covalently cross-linked (Glycyl lysine isopeptide (Lys-Gly) (interchain with G-Cter in SUMO2)). A Phosphoserine modification is found at S21. Glycyl lysine isopeptide (Lys-Gly) (interchain with G-Cter in SUMO2) cross-links involve residues K39 and K43. The active-site Nucleophile is the D125. K191 is covalently cross-linked (Glycyl lysine isopeptide (Lys-Gly) (interchain with G-Cter in SUMO2)). The PUA domain maps to 296 to 371; that stretch reads HKRLVMKDSA…IVAKIKRVIM (76 aa). Position 387 is a phosphoserine (S387). K394 participates in a covalent cross-link: Glycyl lysine isopeptide (Lys-Gly) (interchain with G-Cter in SUMO2). A Glycyl lysine isopeptide (Lys-Gly) (interchain with G-Cter in SUMO1); alternate cross-link involves residue K413. A Glycyl lysine isopeptide (Lys-Gly) (interchain with G-Cter in SUMO2); alternate cross-link involves residue K413. Residues K424 and K433 each participate in a glycyl lysine isopeptide (Lys-Gly) (interchain with G-Cter in SUMO2) cross-link. The segment at 443–514 is disordered; it reads KTAKRKRESE…KAKEVELVSE (72 aa). Positions 446–514 are nuclear and nucleolar localization; that stretch reads KRKRESESES…KAKEVELVSE (69 aa). A phosphoserine mark is found at S451, S453, and S455. The residue at position 458 (T458) is a Phosphothreonine. Residue K467 forms a Glycyl lysine isopeptide (Lys-Gly) (interchain with G-Cter in SUMO2) linkage. The span at 468-480 shows a compositional bias: basic residues; that stretch reads KEKKKSKKDKKAK. S485, S494, and S513 each carry phosphoserine.

The protein belongs to the pseudouridine synthase TruB family. Part of the H/ACA small nucleolar ribonucleoprotein (H/ACA snoRNP) complex, which contains NHP2/NOLA2, GAR1/NOLA1, NOP10/NOLA3, and DKC1/NOLA4, which is presumed to be the catalytic subunit. The complex contains a stable core formed by binding of one or two NOP10-DKC1 heterodimers to NHP2; GAR1 subsequently binds to this core via DKC1. The complex binds a box H/ACA small nucleolar RNA (snoRNA), which may target the specific site of modification within the RNA substrate. During assembly, the complex contains NAF1 instead of GAR1/NOLA1. The complex also interacts with TERC, which contains a 3'-terminal domain related to the box H/ACA snoRNAs. Specific interactions with snoRNAs or TERC are mediated by GAR1 and NHP2. Associates with NOLC1/NOPP140. H/ACA snoRNPs interact with the SMN complex, consisting of SMN1 or SMN2, GEMIN2/SIP1, DDX20/GEMIN3, and GEMIN4. This is mediated by interaction between GAR1 and SMN1 or SMN2. The SMN complex may be required for correct assembly of the H/ACA snoRNP complex. Component of the telomerase holoenzyme complex composed of one molecule of TERT, one molecule of WRAP53/TCAB1, two molecules of H/ACA ribonucleoprotein complex subunits DKC1, NOP10, NHP2 and GAR1, and a telomerase RNA template component (TERC). The telomerase holoenzyme complex is associated with TEP1, SMG6/EST1A and POT1. Interacts with SHQ1; this interaction may lead to the stabilization of DKC1, from the time of its synthesis until its association with NOP10, NHP2, and NAF1 at the nascent H/ACA RNA. Interacts with HMBOX1. Interacts with DHX36. As to expression, ubiquitously expressed.

It localises to the nucleus. Its subcellular location is the nucleolus. It is found in the cajal body. The protein localises to the cytoplasm. The catalysed reaction is uridine in 5S rRNA = pseudouridine in 5S rRNA. Catalytic subunit of H/ACA small nucleolar ribonucleoprotein (H/ACA snoRNP) complex, which catalyzes pseudouridylation of rRNA. This involves the isomerization of uridine such that the ribose is subsequently attached to C5, instead of the normal N1. Each rRNA can contain up to 100 pseudouridine ('psi') residues, which may serve to stabilize the conformation of rRNAs. Required for ribosome biogenesis and telomere maintenance. Also required for correct processing or intranuclear trafficking of TERC, the RNA component of the telomerase reverse transcriptase (TERT) holoenzyme. Functionally, promotes cell to cell and cell to substratum adhesion, increases the cell proliferation rate and leads to cytokeratin hyper-expression. The polypeptide is H/ACA ribonucleoprotein complex subunit DKC1 (Homo sapiens (Human)).